The chain runs to 123 residues: Double-stranded DNA deaminase immunity protein (123 aa).

In terms of assembly, the toxic domain forms a 1:1 complex with the DddI immunity protein. This protein blocks the active site of the toxin.

In terms of biological role, immunity protein component of a toxin-immunity protein module, which functions as a cellular contact-dependent growth inhibition (CDI) system. CDI modules allow bacteria to communicate with and inhibit the growth of closely related neighboring bacteria in a contact-dependent fashion. Bacteria that have this module inhibit or kill bacteria without it, giving them a growth advantage. Specifically inhibits the toxic activity of cognate toxin DddA (C-terminal 163 residue fragment) upon expression in E.coli. The polypeptide is Double-stranded DNA deaminase immunity protein (Burkholderia cenocepacia (strain H111)).